The primary structure comprises 468 residues: Probable citrate synthase, mitochondrial (468 aa).

Active-site residues include His-303, His-349, and Asp-404.

Belongs to the citrate synthase family. In terms of assembly, homodimer.

Its subcellular location is the mitochondrion matrix. It catalyses the reaction oxaloacetate + acetyl-CoA + H2O = citrate + CoA + H(+). The protein operates within carbohydrate metabolism; tricarboxylic acid cycle; isocitrate from oxaloacetate: step 1/2. The chain is Probable citrate synthase, mitochondrial (cts-1) from Caenorhabditis elegans.